The following is a 160-amino-acid chain: Phosphopantetheine adenylyltransferase (160 aa).

Position 9 (Ser9) interacts with substrate. ATP contacts are provided by residues 9–10 (SF) and His17. Residues Lys41, Leu73, and Lys87 each coordinate substrate. Residues 88–90 (GLR), Glu98, and 123–129 (YGYLSSS) each bind ATP.

Belongs to the bacterial CoaD family. In terms of assembly, homohexamer. It depends on Mg(2+) as a cofactor.

It localises to the cytoplasm. The enzyme catalyses (R)-4'-phosphopantetheine + ATP + H(+) = 3'-dephospho-CoA + diphosphate. It functions in the pathway cofactor biosynthesis; coenzyme A biosynthesis; CoA from (R)-pantothenate: step 4/5. Reversibly transfers an adenylyl group from ATP to 4'-phosphopantetheine, yielding dephospho-CoA (dPCoA) and pyrophosphate. The chain is Phosphopantetheine adenylyltransferase from Caldanaerobacter subterraneus subsp. tengcongensis (strain DSM 15242 / JCM 11007 / NBRC 100824 / MB4) (Thermoanaerobacter tengcongensis).